Here is a 124-residue protein sequence, read N- to C-terminus: MAPTAQVAKKGSKKAVKGTKTAXGGKKRNRKRKESYGIYIYKVLKQVHPDTGISSRAMVIMNSFVNDIFERIAGESSRLAQYNKKSTISSREIQTAVRLILPGELAKHAVSEGTKAVTKYTTSK.

Residues 1-31 (MAPTAQVAKKGSKKAVKGTKTAXGGKKRNRK) form a disordered region. Serine 111 is a glycosylation site (O-linked (GlcNAc) serine). Residue lysine 119 forms a Glycyl lysine isopeptide (Lys-Gly) (interchain with G-Cter in ubiquitin) linkage.

Belongs to the histone H2B family. As to quaternary structure, the nucleosome is a histone octamer containing two molecules each of H2A, H2B, H3 and H4 assembled in one H3-H4 heterotetramer and two H2A-H2B heterodimers. The octamer wraps approximately 147 bp of DNA. Monoubiquitination of Lys-119 gives a specific tag for epigenetic transcriptional activation and is also prerequisite for histone H3 'Lys-4' and 'Lys-79' methylation. In terms of processing, glcNAcylation at Ser-111 promotes monoubiquitination of Lys-119. It fluctuates in response to extracellular glucose, and associates with transcribed genes.

Its subcellular location is the nucleus. The protein resides in the chromosome. Its function is as follows. Core component of nucleosome. Nucleosomes wrap and compact DNA into chromatin, limiting DNA accessibility to the cellular machineries which require DNA as a template. Histones thereby play a central role in transcription regulation, DNA repair, DNA replication and chromosomal stability. DNA accessibility is regulated via a complex set of post-translational modifications of histones, also called histone code, and nucleosome remodeling. The polypeptide is Histone H2B, embryonic (Strongylocentrotus purpuratus (Purple sea urchin)).